A 130-amino-acid polypeptide reads, in one-letter code: Small ribosomal subunit protein uS9 (130 aa).

This sequence belongs to the universal ribosomal protein uS9 family.

This Enterococcus faecalis (strain ATCC 700802 / V583) protein is Small ribosomal subunit protein uS9.